The primary structure comprises 396 residues: Tryptophan synthase beta chain (396 aa).

At lysine 86 the chain carries N6-(pyridoxal phosphate)lysine.

Belongs to the TrpB family. As to quaternary structure, tetramer of two alpha and two beta chains. It depends on pyridoxal 5'-phosphate as a cofactor.

It carries out the reaction (1S,2R)-1-C-(indol-3-yl)glycerol 3-phosphate + L-serine = D-glyceraldehyde 3-phosphate + L-tryptophan + H2O. Its pathway is amino-acid biosynthesis; L-tryptophan biosynthesis; L-tryptophan from chorismate: step 5/5. In terms of biological role, the beta subunit is responsible for the synthesis of L-tryptophan from indole and L-serine. This chain is Tryptophan synthase beta chain, found in Yersinia enterocolitica serotype O:8 / biotype 1B (strain NCTC 13174 / 8081).